A 77-amino-acid polypeptide reads, in one-letter code: Translation initiation factor IF-1, chloroplastic (77 aa).

The S1-like domain maps to 1 to 72 (MKKQNLIEME…TKGRITYRLR (72 aa)).

The protein belongs to the IF-1 family. Component of the 30S ribosomal translation pre-initiation complex which assembles on the 30S ribosome in the order IF-2 and IF-3, IF-1 and N-formylmethionyl-tRNA(fMet); mRNA recruitment can occur at any time during PIC assembly.

The protein resides in the plastid. It localises to the chloroplast. In terms of biological role, one of the essential components for the initiation of protein synthesis. Stabilizes the binding of IF-2 and IF-3 on the 30S subunit to which N-formylmethionyl-tRNA(fMet) subsequently binds. Helps modulate mRNA selection, yielding the 30S pre-initiation complex (PIC). Upon addition of the 50S ribosomal subunit IF-1, IF-2 and IF-3 are released leaving the mature 70S translation initiation complex. In Zygnema circumcarinatum (Green alga), this protein is Translation initiation factor IF-1, chloroplastic.